The following is a 306-amino-acid chain: Acetyl-coenzyme A carboxylase carboxyl transferase subunit beta (306 aa).

A CoA carboxyltransferase N-terminal domain is found at 27–296 (LWHKCPSCDA…PRFVAPVIEP (270 aa)). Residues C31, C34, C50, and C53 each coordinate Zn(2+). The C4-type zinc finger occupies 31 to 53 (CPSCDAVLYRPELEKTLDVCPKC).

Belongs to the AccD/PCCB family. As to quaternary structure, acetyl-CoA carboxylase is a heterohexamer composed of biotin carboxyl carrier protein (AccB), biotin carboxylase (AccC) and two subunits each of ACCase subunit alpha (AccA) and ACCase subunit beta (AccD). Requires Zn(2+) as cofactor.

It localises to the cytoplasm. The catalysed reaction is N(6)-carboxybiotinyl-L-lysyl-[protein] + acetyl-CoA = N(6)-biotinyl-L-lysyl-[protein] + malonyl-CoA. The protein operates within lipid metabolism; malonyl-CoA biosynthesis; malonyl-CoA from acetyl-CoA: step 1/1. In terms of biological role, component of the acetyl coenzyme A carboxylase (ACC) complex. Biotin carboxylase (BC) catalyzes the carboxylation of biotin on its carrier protein (BCCP) and then the CO(2) group is transferred by the transcarboxylase to acetyl-CoA to form malonyl-CoA. The protein is Acetyl-coenzyme A carboxylase carboxyl transferase subunit beta of Pseudomonas syringae pv. tomato (strain ATCC BAA-871 / DC3000).